Reading from the N-terminus, the 383-residue chain is Cell division protein FtsZ (383 aa).

GTP-binding positions include 20-24, 107-109, Glu138, Arg142, and Asn186; these read GGGGN and GTG.

It belongs to the FtsZ family. In terms of assembly, homodimer. Polymerizes to form a dynamic ring structure in a strictly GTP-dependent manner. Interacts directly with several other division proteins.

The protein localises to the cytoplasm. Its function is as follows. Essential cell division protein that forms a contractile ring structure (Z ring) at the future cell division site. The regulation of the ring assembly controls the timing and the location of cell division. One of the functions of the FtsZ ring is to recruit other cell division proteins to the septum to produce a new cell wall between the dividing cells. Binds GTP and shows GTPase activity. This Escherichia coli O157:H7 protein is Cell division protein FtsZ.